Reading from the N-terminus, the 260-residue chain is Large ribosomal subunit protein uL2 (260 aa).

The interval 208 to 230 (EHPHGGGNHQHIGHPSTVRRDAS) is disordered.

The protein belongs to the universal ribosomal protein uL2 family.

The protein localises to the cytoplasm. The polypeptide is Large ribosomal subunit protein uL2 (Caenorhabditis elegans).